The primary structure comprises 329 residues: Ribosomal RNA small subunit methyltransferase H (329 aa).

Residues 39–41 (GGY), Asp-57, Phe-84, Asp-100, and Gln-107 contribute to the S-adenosyl-L-methionine site. The segment at 285-305 (GPDKDELAQNPRSRSALLRVG) is disordered.

It belongs to the methyltransferase superfamily. RsmH family.

The protein resides in the cytoplasm. It catalyses the reaction cytidine(1402) in 16S rRNA + S-adenosyl-L-methionine = N(4)-methylcytidine(1402) in 16S rRNA + S-adenosyl-L-homocysteine + H(+). Specifically methylates the N4 position of cytidine in position 1402 (C1402) of 16S rRNA. The polypeptide is Ribosomal RNA small subunit methyltransferase H (Ruegeria sp. (strain TM1040) (Silicibacter sp.)).